Here is a 152-residue protein sequence, read N- to C-terminus: Large ribosomal subunit protein bL9 (152 aa).

It belongs to the bacterial ribosomal protein bL9 family.

In terms of biological role, binds to the 23S rRNA. This is Large ribosomal subunit protein bL9 from Saccharophagus degradans (strain 2-40 / ATCC 43961 / DSM 17024).